The chain runs to 63 residues: Large ribosomal subunit protein bL35 (63 aa).

It belongs to the bacterial ribosomal protein bL35 family.

The polypeptide is Large ribosomal subunit protein bL35 (Campylobacter concisus (strain 13826)).